Here is a 152-residue protein sequence, read N- to C-terminus: Small ribosomal subunit protein uS15 (152 aa).

The protein belongs to the universal ribosomal protein uS15 family. In terms of assembly, part of the 30S ribosomal subunit.

In Saccharolobus solfataricus (strain ATCC 35092 / DSM 1617 / JCM 11322 / P2) (Sulfolobus solfataricus), this protein is Small ribosomal subunit protein uS15.